We begin with the raw amino-acid sequence, 214 residues long: tRNA (guanine-N(7)-)-methyltransferase (214 aa).

Residues Glu43, Glu68, Asp95, and Asp117 each coordinate S-adenosyl-L-methionine. Residue Asp117 is part of the active site. Residues Lys121, Asp153, and Thr191–Glu194 each bind substrate.

The protein belongs to the class I-like SAM-binding methyltransferase superfamily. TrmB family.

It carries out the reaction guanosine(46) in tRNA + S-adenosyl-L-methionine = N(7)-methylguanosine(46) in tRNA + S-adenosyl-L-homocysteine. The protein operates within tRNA modification; N(7)-methylguanine-tRNA biosynthesis. Its function is as follows. Catalyzes the formation of N(7)-methylguanine at position 46 (m7G46) in tRNA. In Lachnoclostridium phytofermentans (strain ATCC 700394 / DSM 18823 / ISDg) (Clostridium phytofermentans), this protein is tRNA (guanine-N(7)-)-methyltransferase.